The sequence spans 720 residues: Engulfment and cell motility protein 3 (720 aa).

In terms of domain architecture, ELMO spans E307–L479. The PH domain occupies R542–S664. The SH3-binding signature appears at P696 to P706.

In terms of assembly, probably interacts directly with the SH3-domain of DOCK1 via its SH3-binding site. Part of a complex with DOCK1 and RAC1. Interacts with ADGRB3.

It localises to the cytoplasm. Its function is as follows. Involved in cytoskeletal rearrangements required for phagocytosis of apoptotic cells and cell motility. Acts in association with DOCK1 and CRK. Was initially proposed to be required in complex with DOCK1 to activate Rac Rho small GTPases. May enhance the guanine nucleotide exchange factor (GEF) activity of DOCK1. This Homo sapiens (Human) protein is Engulfment and cell motility protein 3 (ELMO3).